The primary structure comprises 1265 residues: 1-phosphatidylinositol 4,5-bisphosphate phosphodiesterase gamma-2 (1265 aa).

One can recognise a PH domain in the interval 20–131; sequence RALELGTVMT…WLSGLKILHQ (112 aa). Residues 312–456 form the PI-PLC X-box domain; it reads QDMNNPLSHY…LREKIIIKHK (145 aa). Active-site residues include His-327 and His-372. SH2 domains follow at residues 532–635 and 646–735; these read WFHK…TDPV and WYYD…RYPV. Tyr-753 and Tyr-759 each carry phosphotyrosine; by BTK. The SH3 domain occupies 769 to 829; sequence MPQRTVKALY…PSNYVEDIST (61 aa). The region spanning 930–1044 is the PI-PLC Y-box domain; the sequence is LSDLVVYCKP…GYVLQPESMR (115 aa). Residues 1038-1169 enclose the C2 domain; the sequence is LQPESMRTEK…SGFRSVPLKN (132 aa). Tyr-1197 carries the post-translational modification Phosphotyrosine; by BTK. Phosphotyrosine is present on residues Tyr-1217 and Tyr-1245.

Part of a complex composed of EEIG1, TNFRSF11A/RANK, PLCG2, GAB2, TEC and BTK; complex formation increases in the presence of TNFSF11/RANKL. Interacts (via SH2 domain) with CSF1R (tyrosine phosphorylated). Interacts constitutively with THEMIS2. Ca(2+) is required as a cofactor. In terms of processing, phosphorylated on tyrosine residues by CSF1R. Phosphorylated on tyrosine residues by BTK and SYK; upon ligand-induced activation of a variety of growth factor receptors and immune system receptors. Phosphorylation leads to increased phospholipase activity.

It localises to the membrane raft. It carries out the reaction a 1,2-diacyl-sn-glycero-3-phospho-(1D-myo-inositol-4,5-bisphosphate) + H2O = 1D-myo-inositol 1,4,5-trisphosphate + a 1,2-diacyl-sn-glycerol + H(+). The production of the second messenger molecules diacylglycerol (DAG) and inositol 1,4,5-trisphosphate (IP3) is mediated by activated phosphatidylinositol-specific phospholipase C enzymes. It is a crucial enzyme in transmembrane signaling. This Homo sapiens (Human) protein is 1-phosphatidylinositol 4,5-bisphosphate phosphodiesterase gamma-2.